Consider the following 144-residue polypeptide: MRLNTLSPAEGAKHNAKRLGRGIGSGLGKTSGRGHKGQKARTGGGVRRGFEGGQMPLYRRLPKFGFTSMKSAVTAEVRLNDLAKVEGNIITLDTLKAANVLTKDIRFAKVILAGEVKTAVTIRGLGVTKGAKVAIEAAGGSIEE.

Positions 1–53 (MRLNTLSPAEGAKHNAKRLGRGIGSGLGKTSGRGHKGQKARTGGGVRRGFEGG) are disordered. The segment covering 21–31 (RGIGSGLGKTS) has biased composition (gly residues).

This sequence belongs to the universal ribosomal protein uL15 family. In terms of assembly, part of the 50S ribosomal subunit.

Binds to the 23S rRNA. The protein is Large ribosomal subunit protein uL15 of Histophilus somni (strain 129Pt) (Haemophilus somnus).